We begin with the raw amino-acid sequence, 111 residues long: Small ribosomal subunit protein uS15c (111 aa).

Belongs to the universal ribosomal protein uS15 family. As to quaternary structure, part of the 30S ribosomal subunit.

It is found in the plastid. The protein localises to the chloroplast. This Staurastrum punctulatum (Green alga) protein is Small ribosomal subunit protein uS15c (rps15).